The following is a 516-amino-acid chain: GPI mannosyltransferase 4 (516 aa).

At Met1 to Gln5 the chain is on the lumenal side. The chain crosses the membrane as a helical span at residues Trp6 to His26. Residues Pro27–Ser60 lie on the Cytoplasmic side of the membrane. The helical transmembrane segment at Tyr61 to Ile81 threads the bilayer. Over Gln82 to Val175 the chain is Lumenal. The chain crosses the membrane as a helical span at residues Ile176 to Phe196. Residues Leu197–His210 lie on the Cytoplasmic side of the membrane. The chain crosses the membrane as a helical span at residues Trp211–Ile231. Residues Asp232–His270 lie on the Lumenal side of the membrane. A helical membrane pass occupies residues Leu271–Tyr291. Topologically, residues Lys292–Lys295 are cytoplasmic. A helical membrane pass occupies residues Leu296–Leu316. Arg317 is a topological domain (lumenal). Residues Phe318–Thr338 form a helical membrane-spanning segment. Residues Leu339 to Thr348 are Cytoplasmic-facing. Residues Trp349–Ile369 traverse the membrane as a helical segment. At Gln370 to Leu516 the chain is on the lumenal side. N-linked (GlcNAc...) asparagine glycans are attached at residues Asn403 and Asn452.

Belongs to the glycosyltransferase 22 family. PIGZ subfamily.

The protein localises to the endoplasmic reticulum membrane. It functions in the pathway glycolipid biosynthesis; glycosylphosphatidylinositol-anchor biosynthesis. Alpha-1,2-mannosyltransferase involved in glycosylphosphatidylinositol-anchor biosynthesis. Transfers a fourth mannose to trimannosyl-GPIs during GPI precursor assembly. The presence of a fourth mannose in GPI is essential in fungi. Involved in plasmid maintenance with SMP2. In Saccharomyces cerevisiae (strain ATCC 204508 / S288c) (Baker's yeast), this protein is GPI mannosyltransferase 4 (SMP3).